A 119-amino-acid chain; its full sequence is cAMP-responsive element-binding protein-like 2 (119 aa).

Residues 1–23 (MDDSKIVAGKVKKPGKRGRKPAK) form a disordered region. A compositionally biased stretch (basic residues) spans 10 to 21 (KVKKPGKRGRKP). A bZIP domain is found at 23-86 (KIDLKAKLER…LAMDQGKIPS (64 aa)). A basic motif region spans residues 29–60 (KLERSRQSARECRARKKLRYQYLEELVSSKER). The leucine-zipper stretch occupies residues 62–69 (ICALREEL). Residues 95–119 (DEQKTPQSCSNKTTKNSKYSSSSGI) form a disordered region. Over residues 102–119 (SCSNKTTKNSKYSSSSGI) the composition is skewed to low complexity.

The protein belongs to the bZIP family. ATF subfamily.

Its subcellular location is the nucleus. Functionally, probable regulator of creb1 transcriptional activity which is involved in adipose cells differentiation. May also play a regulatory role in the cell cycle. The chain is cAMP-responsive element-binding protein-like 2 (crebl2) from Danio rerio (Zebrafish).